A 265-amino-acid polypeptide reads, in one-letter code: Molybdenum-pterin-binding protein MopA (265 aa).

Mop domains lie at 126–192 (RTSN…MLAA) and 198–264 (RISA…ILAM).

It belongs to the ModE family.

This chain is Molybdenum-pterin-binding protein MopA (mopA), found in Rhodobacter capsulatus (Rhodopseudomonas capsulata).